The sequence spans 462 residues: Bifunctional enzyme LpxC/FabZ (462 aa).

The tract at residues 1–302 is UDP-3-O-acyl-N-acetylglucosamine deacetylase; that stretch reads MQKQQTLKDK…MARLIRKEIK (302 aa). Positions 78, 260, and 264 each coordinate Zn(2+). Histidine 287 (proton donor) is an active-site residue. A 3-hydroxyacyl-[acyl-carrier-protein] dehydratase region spans residues 303–462; it reads QNEAQAPVYN…FMAQIIQNKE (160 aa). The active site involves histidine 364.

The protein in the N-terminal section; belongs to the LpxC family. It in the C-terminal section; belongs to the thioester dehydratase family. Zn(2+) serves as cofactor.

The protein resides in the cytoplasm. The catalysed reaction is a UDP-3-O-[(3R)-3-hydroxyacyl]-N-acetyl-alpha-D-glucosamine + H2O = a UDP-3-O-[(3R)-3-hydroxyacyl]-alpha-D-glucosamine + acetate. It catalyses the reaction a (3R)-hydroxyacyl-[ACP] = a (2E)-enoyl-[ACP] + H2O. The protein operates within glycolipid biosynthesis; lipid IV(A) biosynthesis; lipid IV(A) from (3R)-3-hydroxytetradecanoyl-[acyl-carrier-protein] and UDP-N-acetyl-alpha-D-glucosamine: step 2/6. In terms of biological role, catalyzes the hydrolysis of UDP-3-O-myristoyl-N-acetylglucosamine to form UDP-3-O-myristoylglucosamine and acetate, the committed step in lipid A biosynthesis. Its function is as follows. Involved in unsaturated fatty acids biosynthesis. Catalyzes the dehydration of short chain beta-hydroxyacyl-ACPs and long chain saturated and unsaturated beta-hydroxyacyl-ACPs. This is Bifunctional enzyme LpxC/FabZ (lpxC/fabZ) from Porphyromonas gingivalis (strain ATCC BAA-308 / W83).